A 319-amino-acid polypeptide reads, in one-letter code: Acetyl esterase (319 aa).

The Involved in the stabilization of the negatively charged intermediate by the formation of the oxyanion hole motif lies at 91–93 (HGG). Catalysis depends on residues serine 165, aspartate 262, and histidine 292.

The protein belongs to the 'GDXG' lipolytic enzyme family. As to quaternary structure, homodimer. Interacts with MalT and MelA.

Its subcellular location is the cytoplasm. Functionally, displays esterase activity towards short chain fatty esters (acyl chain length of up to 8 carbons). Able to hydrolyze triacetylglycerol (triacetin) and tributyrylglycerol (tributyrin), but not trioleylglycerol (triolein) or cholesterol oleate. Negatively regulates MalT activity by antagonizing maltotriose binding. Inhibits MelA galactosidase activity. The polypeptide is Acetyl esterase (Escherichia coli (strain ATCC 8739 / DSM 1576 / NBRC 3972 / NCIMB 8545 / WDCM 00012 / Crooks)).